A 107-amino-acid chain; its full sequence is Ig kappa chain V-VI region TEPC 601/TEPC 191 (107 aa).

Positions 1 to 23 (EIVLTQSPAITAASLGQKVTITC) are framework-1. Cysteines 23 and 87 form a disulfide. Positions 24-33 (SASSSVSYMH) are complementarity-determining-1. The interval 34–48 (WYQQKSGTSPKPWIY) is framework-2. The tract at residues 49-55 (EISKLAS) is complementarity-determining-2. The segment at 56 to 87 (GVPARFSGSGSGTSYSLTISSMEAEDAAIYYC) is framework-3. The segment at 88-96 (QQWNYPLIT) is complementarity-determining-3. The framework-4 stretch occupies residues 97 to 106 (FGAGTKLELK).

This chain is Ig kappa chain V-VI region TEPC 601/TEPC 191, found in Mus musculus (Mouse).